Reading from the N-terminus, the 511-residue chain is 2-isopropylmalate synthase (511 aa).

The region spanning 5 to 267 (LIIFDTTLRD…DTNIDTMHIL (263 aa)) is the Pyruvate carboxyltransferase domain. Mn(2+) contacts are provided by aspartate 14, histidine 202, histidine 204, and asparagine 238. The tract at residues 393 to 511 (KLVSLKVCTE…TVTNKAHPQI (119 aa)) is regulatory domain.

Belongs to the alpha-IPM synthase/homocitrate synthase family. LeuA type 1 subfamily. Homodimer. Mn(2+) is required as a cofactor.

It is found in the cytoplasm. The enzyme catalyses 3-methyl-2-oxobutanoate + acetyl-CoA + H2O = (2S)-2-isopropylmalate + CoA + H(+). It functions in the pathway amino-acid biosynthesis; L-leucine biosynthesis; L-leucine from 3-methyl-2-oxobutanoate: step 1/4. Functionally, catalyzes the condensation of the acetyl group of acetyl-CoA with 3-methyl-2-oxobutanoate (2-ketoisovalerate) to form 3-carboxy-3-hydroxy-4-methylpentanoate (2-isopropylmalate). The chain is 2-isopropylmalate synthase from Vesicomyosocius okutanii subsp. Calyptogena okutanii (strain HA).